A 575-amino-acid chain; its full sequence is MNKIDKDILKIFESKENEQFDEDQEKDEKKMNEVDFYSILNISRNATDDEIKIAFKKLAFTYHPDKQTNEELKKETQDIFTLITLAKDTLSDPKLRAIYDQFGLEGIEHSKAIVNKYKEVDKLLQALDRIQKENEEDKLIQSFSATGSQSISLAYHHEYRHFFFKTLKSEAQFDIKTQKYGSFEFVPSITRKKNLAWFGLETSYLYPITQNTELFLSNNYNEANEGSIQTIGLKSLLSANTYGSIHCAFFDSFQPARFGCLLTRQLSPTITAIFRGTLQKEFWQGSLTLKRIVQKRLFEITIDSSNLGGLSGSITRDIPISKKSRISFSVGGYGGGFPLYSAGQHGFTGAAIGFKRKITKVFDIDLSMHVNPSRYLYVIGLHHRYQSLEIPIPIYSDLSLSTSLLFFTLPAVTLSLLKYLVVKPLMKKKEQKKIMEKKEKYADQARKAKRKAEMDITLVKQLVENKVLKEKTKNGLIIQEAVYGKLDEKVDHSDPFSVEFPPTIDVTIPLQYLVEDSKLVLHGNNKKSDLLGFWDPRISEEKQLKVTYFFQNRLHRITVNDIDQLLIPLKSHLIQ.

The J domain maps to 35-103 (DFYSILNISR…KLRAIYDQFG (69 aa)). A coiled-coil region spans residues 427–456 (KKKEQKKIMEKKEKYADQARKAKRKAEMDI).

Belongs to the DNAJC11 family.

The sequence is that of DnaJ homolog subfamily C member 11 homolog (dnajc11) from Dictyostelium discoideum (Social amoeba).